Here is a 522-residue protein sequence, read N- to C-terminus: TNF receptor-associated factor 6 (522 aa).

Positions 1–354 (MSLLNCENSC…EAQQCNGIYI (354 aa)) are interaction with TAX1BP1. The RING-type; degenerate zinc finger occupies 70–109 (CPICLMALREAVQTPCGHRFCKACIIKSIRDAGHKCPVDN). Lysine 124 is covalently cross-linked (Glycyl lysine isopeptide (Lys-Gly) (interchain with G-Cter in SUMO); alternate). Lysine 124 is covalently cross-linked (Glycyl lysine isopeptide (Lys-Gly) (interchain with G-Cter in ubiquitin); alternate). Residue lysine 142 forms a Glycyl lysine isopeptide (Lys-Gly) (interchain with G-Cter in SUMO) linkage. 2 TRAF-type zinc fingers span residues 150-202 (DHQA…EDKE) and 203-259 (IHDQ…NHLA). Positions 288–348 (YVSEVRNFQE…DKVAEIEAQQ (61 aa)) form a coiled coil. Residue lysine 319 forms a Glycyl lysine isopeptide (Lys-Gly) (interchain with G-Cter in ubiquitin) linkage. An MATH domain is found at 350–499 (NGIYIWKIGN…DDTLLVRCEV (150 aa)). An interaction with TANK region spans residues 355 to 522 (WKIGNFGMHL…FQPRSTDSGV (168 aa)). Lysine 453 participates in a covalent cross-link: Glycyl lysine isopeptide (Lys-Gly) (interchain with G-Cter in SUMO).

This sequence belongs to the TNF receptor-associated factor family. A subfamily. In terms of assembly, homotrimer. Homooligomer. N-terminal region is dimeric while C-terminal region is trimeric; maybe providing a mode of oligomerization. Upon IL1B treatment, forms a complex with PELI1, IRAK1, IRAK4 and MYD88; this complex recruits MAP3K7/TAK1, TAB1 and TAB2 to mediate NF-kappa-B activation. Direct binding of SMAD6 to PELI1 prevents the complex formation and hence negatively regulates IL1R-TLR signaling and eventually NF-kappa-B-mediated gene expression. Binds to TNFRSF5/CD40 and TNFRSF11A/RANK. Associates with NGFR, TNFRSF17, IRAK2, IRAK3, RIPK2, MAP3K1, MAP3K5, MAP3K14, CSK, TRAF, TRAF-interacting protein TRIP and TNF receptor associated protein TDP2. Interacts with IL17R. Interacts with SQSTM1 bridging NTRK1 and NGFR. Forms a ternary complex with SQSTM1 and PRKCZ. Interacts with PELI2 and PELI3. Binds UBE2V1. Interacts with TAX1BP1; this interaction mediates deubiquitination of TRAF6 and inhibition of NF-kappa-B activation. Interacts with ZNF675. Interacts with ARRB1 and ARRB2. Interacts with MAP3K7 and TAB1/MAP3K7IP1; during IL-1 signaling. Interacts with UBE2N. Interacts with TGFBR1, HDAC1 and RANGAP1. Interacts with AKT1, AKT2 and AKT3. Interacts (via TRAF domains) with NUMBL (via C-terminal). Interacts with RBCK1. Interacts with LIMD1 (via LIM domains). Interacts with RSAD2/viperin. Interacts (via C-terminus) with EIF2AK2/PKR (via the kinase catalytic domain). Interacts with ZFAND5. Interacts with IL1RL1. Interacts with TRAFD1. Interacts with AJUBA. Interacts with MAVS/IPS1. Interacts (via TRAF domains) with DYNC2I2 (via WD domains). Interacts with IFIT3 (via N-terminus). Interacts with TICAM2. Interacts with CARD14. Interacts with CD40 and MAP3K8; the interaction is required for ERK activation. Interacts with TICAM1 and this interaction is enhanced in the presence of WDFY1. Interacts with TANK; this interaction increases in response to DNA damage. Interacts with USP10; this interaction increases in response to DNA damage. Interacts with ZC3H12A; this interaction increases in response to DNA damage and is stimulated by TANK. Interacts with WDFY3. Interacts with TRIM13. Interacts with GPS2. Interacts (via C-terminus) with SASH1. Interacts with LRRC19. Interacts with IL17RA and TRAF3IP2. Interacts with TOMM70. Interacts with AMBRA1; interaction is required to mediate 'Lys-63'-linked ubiquitination of ULK1. Interacts with CRBN; this interaction inhibits TLR4-mediated signaling by preventing TRAF6-mediated ubiquitination of ECSIT. Post-translationally, sumoylated on Lys-124, Lys-142 and Lys-453 with SUMO1. In terms of processing, polyubiquitinated on Lys-124 by TRAF3IP2; after cell stimulation with IL17A. Polyubiquitinated on Lys-124; after cell stimulation with IL1B or TGFB. This ligand-induced cell stimulation leads to dimerization/oligomerization of TRAF6 molecules, followed by auto-ubiquitination which involves UBE2N and UBE2V1 and leads to TRAF6 activation. This 'Lys-63' site-specific poly-ubiquitination appears to be associated with the activation of signaling molecules. Deubiquitinated by USP10 in a TANK-dependent manner, leading to the negative regulation of NF-kappa-B signaling upon DNA damage. LRRC19 induces 'Lys-63' ubiquitination. Ubiquitinated at Lys-319 by the SCF(FBXL2) complex, leading to its degradation by the proteasome.

The protein localises to the cytoplasm. It localises to the cell cortex. The protein resides in the nucleus. It is found in the lipid droplet. The enzyme catalyses S-ubiquitinyl-[E2 ubiquitin-conjugating enzyme]-L-cysteine + [acceptor protein]-L-lysine = [E2 ubiquitin-conjugating enzyme]-L-cysteine + N(6)-ubiquitinyl-[acceptor protein]-L-lysine.. It functions in the pathway protein modification; protein ubiquitination. Functionally, E3 ubiquitin ligase that, together with UBE2N and UBE2V1, mediates the synthesis of 'Lys-63'-linked-polyubiquitin chains conjugated to proteins, such as ECSIT, IKBKG, IRAK1, AKT1 and AKT2. Also mediates ubiquitination of free/unanchored polyubiquitin chain that leads to MAP3K7 activation. Leads to the activation of NF-kappa-B and JUN. Seems to also play a role in dendritic cells (DCs) maturation and/or activation. Represses c-Myb-mediated transactivation, in B-lymphocytes. Adapter protein that seems to play a role in signal transduction initiated via TNF receptor, IL-1 receptor and IL-17 receptor. Regulates osteoclast differentiation by mediating the activation of adapter protein complex 1 (AP-1) and NF-kappa-B, in response to RANK-L stimulation. Together with MAP3K8, mediates CD40 signals that activate ERK in B-cells and macrophages, and thus may play a role in the regulation of immunoglobulin production. Acts as a regulator of the JNK and NF-kappa-B signaling pathways by initiating assembly of heterotypic 'Lys-63'-/'Lys-48'-linked branched ubiquitin chains that are then recognized by TAB2: TRAF6 catalyzes initial 'Lys-63'-linked-polyubiquitin chains that are then branched via 'Lys-48'-linked polyubiquitin by HUWE1. 'Lys-63'-/'Lys-48'-linked branched ubiquitin chains protect 'Lys-63'-linkages from CYLD deubiquitination. Also participates in the TCR signaling by ubiquitinating LAT. This is TNF receptor-associated factor 6 (TRAF6) from Cercocebus atys (Sooty mangabey).